The following is a 351-amino-acid chain: MEFATFILAAQRGYHQSSASVIRNSIEQAILSEQAGFSTAWFAEHHFNNYSLVPSPLLMVAHCAGLTSTIRLGTAVCVLPLYQPQRLLAEIGFVDVVANGRLELGVGSGYQQFEFDRFGVNIDEAPAIFSECLDILLKGLKQKIFTHSGRYMQIPPTAISVRTLQKPTPPIWIATASSKTMARAYREGHNLFVTALHDGLETLGLLRGIIKTAAGSEGKEVRDSKVSLLRCCYASDDGAEINSYIDNARFQRRLSEALQQRRQQSKDGYMLEEMPTHQDLSFDTMRKNLPIGSINRVIDRLLEEIDVLKPDQIAIQTQLGDFDQKTMLRQIELWGDKIIPAVQKSLGRSEA.

The protein belongs to the bacterial luciferase oxidoreductase family.

This is an uncharacterized protein from Sinorhizobium fredii (strain NBRC 101917 / NGR234).